A 467-amino-acid polypeptide reads, in one-letter code: Asparagine--tRNA ligase (467 aa).

This sequence belongs to the class-II aminoacyl-tRNA synthetase family. In terms of assembly, homodimer.

It localises to the cytoplasm. It carries out the reaction tRNA(Asn) + L-asparagine + ATP = L-asparaginyl-tRNA(Asn) + AMP + diphosphate + H(+). In Pasteurella multocida (strain Pm70), this protein is Asparagine--tRNA ligase.